The sequence spans 236 residues: Purine nucleoside phosphorylase DeoD-type (236 aa).

Histidine 5 provides a ligand contact to a purine D-ribonucleoside. Residues glycine 21, arginine 25, arginine 44, and 88–91 each bind phosphate; that span reads RVGS. Residues 180 to 182 and 204 to 205 contribute to the a purine D-ribonucleoside site; these read DME and SD. The Proton donor role is filled by aspartate 205.

It belongs to the PNP/UDP phosphorylase family. In terms of assembly, homohexamer; trimer of homodimers.

It catalyses the reaction a purine D-ribonucleoside + phosphate = a purine nucleobase + alpha-D-ribose 1-phosphate. The catalysed reaction is a purine 2'-deoxy-D-ribonucleoside + phosphate = a purine nucleobase + 2-deoxy-alpha-D-ribose 1-phosphate. In terms of biological role, catalyzes the reversible phosphorolytic breakdown of the N-glycosidic bond in the beta-(deoxy)ribonucleoside molecules, with the formation of the corresponding free purine bases and pentose-1-phosphate. This chain is Purine nucleoside phosphorylase DeoD-type, found in Aliivibrio salmonicida (strain LFI1238) (Vibrio salmonicida (strain LFI1238)).